The chain runs to 500 residues: Aspartyl/glutamyl-tRNA(Asn/Gln) amidotransferase subunit B (500 aa).

This sequence belongs to the GatB/GatE family. GatB subfamily. As to quaternary structure, heterotrimer of A, B and C subunits.

It carries out the reaction L-glutamyl-tRNA(Gln) + L-glutamine + ATP + H2O = L-glutaminyl-tRNA(Gln) + L-glutamate + ADP + phosphate + H(+). The enzyme catalyses L-aspartyl-tRNA(Asn) + L-glutamine + ATP + H2O = L-asparaginyl-tRNA(Asn) + L-glutamate + ADP + phosphate + 2 H(+). In terms of biological role, allows the formation of correctly charged Asn-tRNA(Asn) or Gln-tRNA(Gln) through the transamidation of misacylated Asp-tRNA(Asn) or Glu-tRNA(Gln) in organisms which lack either or both of asparaginyl-tRNA or glutaminyl-tRNA synthetases. The reaction takes place in the presence of glutamine and ATP through an activated phospho-Asp-tRNA(Asn) or phospho-Glu-tRNA(Gln). The sequence is that of Aspartyl/glutamyl-tRNA(Asn/Gln) amidotransferase subunit B from Rhizobium leguminosarum bv. trifolii (strain WSM2304).